The following is a 394-amino-acid chain: Elongation factor Tu (394 aa).

The tr-type G domain maps to 10–204; the sequence is KPHINVGTIG…YLDTYIPEPK (195 aa). The tract at residues 19 to 26 is G1; it reads GHVDHGKT. GTP is bound at residue 19-26; the sequence is GHVDHGKT. Residue threonine 26 participates in Mg(2+) binding. The G2 stretch occupies residues 60 to 64; that stretch reads GITIN. The tract at residues 81-84 is G3; it reads DCPG. Residues 81-85 and 136-139 contribute to the GTP site; these read DCPGH and NKCD. Residues 136–139 form a G4 region; it reads NKCD. The interval 174–176 is G5; that stretch reads SAL.

This sequence belongs to the TRAFAC class translation factor GTPase superfamily. Classic translation factor GTPase family. EF-Tu/EF-1A subfamily. Monomer.

The protein localises to the cytoplasm. It catalyses the reaction GTP + H2O = GDP + phosphate + H(+). Its function is as follows. GTP hydrolase that promotes the GTP-dependent binding of aminoacyl-tRNA to the A-site of ribosomes during protein biosynthesis. The chain is Elongation factor Tu from Buchnera aphidicola subsp. Baizongia pistaciae (strain Bp).